We begin with the raw amino-acid sequence, 80 residues long: Nuclear protein 1 (80 aa).

A disordered region spans residues glycine 40–arginine 80. Residues glycine 61–arginine 80 show a composition bias toward basic and acidic residues. Residues arginine 64–arginine 80 carry the Nuclear localization signal motif.

The protein belongs to the NUPR family. As to quaternary structure, monomer. Directly interacts with MSL1 and binds MORF4L1, two components of histone acetyltransferase complex; the interaction with MORF4L1 may be mediated by MSL1. Interacts with EP300; this interaction enhances the effect of EP300 on PAX2 transcription factor activity. Interacts with PAXIP1; this interaction prevents PAXIP1 inhibition of PAX2 transcription factor activity. Interacts with COPS5; this interaction allows COPS5-dependent CDKN1B nuclear to cytoplasm translocation. Interacts with RNF2. Interacts with FOXO3; this interaction represses FOXO3 transactivation. Interacts with PTMA; regulates apoptotic process. Interacts with MYOD1, EP300 and DDX5; this interaction coordinates the association of anti-proliferative and pro-myogenic proteins at the myogenin promoter. Interacts with TP53; interaction is stress-dependent. Forms a complex with EP300 and TP53; this complex binds CDKN1A promoter leading to transcriptional induction of CDKN1A. Phosphorylated. Phosphorylation promotes DNA-binding activity. In terms of processing, acetylated. In terms of tissue distribution, strongly activated in pancreatic acinar cells during the acute phase of pancreatitis, in developing pancreas and during pancreatic regeneration.

The protein resides in the nucleus. It localises to the cytoplasm. Its subcellular location is the perinuclear region. In terms of biological role, transcription regulator that converts stress signals into a program of gene expression that empowers cells with resistance to the stress induced by a change in their microenvironment. Thereby participates in the regulation of many processes namely cell-cycle, apoptosis, autophagy and DNA repair responses. Controls cell cycle progression and protects cells from genotoxic stress induced by doxorubicin through the complex formation with TP53 and EP300 that binds CDKN1A promoter leading to transcriptional induction of CDKN1A. Protects pancreatic cancer cells from stress-induced cell death by binding the RELB promoter and activating its transcription, leading to IER3 transactivation. Negatively regulates apoptosis through interaction with PTMA. Inhibits autophagy-induced apoptosis in cardiac cells through FOXO3 interaction, inducing cytoplasmic translocation of FOXO3 thereby preventing the FOXO3 association with the pro-autophagic BNIP3 promoter. Inhibits cell growth and facilitates programmed cell death by apoptosis after adriamycin-induced DNA damage through transactivation of TP53. Regulates methamphetamine-induced apoptosis and autophagy through DDIT3-mediated endoplasmic reticulum stress pathway. Participates in DNA repair following gamma-irradiation by facilitating DNA access of the transcription machinery through interaction with MSL1 leading to inhibition of histone H4' Lys-16' acetylation (H4K16ac). Coactivator of PAX2 transcription factor activity, both by recruiting the EP300 cofactor to increase PAX2 transcription factor activity and by binding PAXIP1 to suppress PAXIP1-induced inhibition on PAX2. Positively regulates cell cycle progression through interaction with COPS5 inducing cytoplasmic translocation of CDKN1B leading to the CDKN1B degradation. Coordinates, through its interaction with EP300, the assiociation of MYOD1, EP300 and DDX5 to the MYOG promoter, leading to inhibition of cell-cycle progression and myogenic differentiation promotion. Negatively regulates beta cell proliferation via inhibition of cell-cycle regulatory genes expression through the suppression of their promoter activities. Also required for LHB expression and ovarian maturation. Exacerbates CNS inflammation and demyelination upon cuprizone treatment. This Rattus norvegicus (Rat) protein is Nuclear protein 1.